Here is a 451-residue protein sequence, read N- to C-terminus: Aminodeoxychorismate synthase component 1 (451 aa).

Residues Ser34, 41–44 (HNRF), and 238–240 (PFS) contribute to the L-tryptophan site. Residue Glu256 is the Proton donor of the active site. Residue Lys272 is the N6-(4-deoxychorismate)-lysine intermediate of the active site.

The protein belongs to the anthranilate synthase component I family. As to quaternary structure, monomer. Heterodimer consisting of two non-identical subunits: a glutamine amidotransferase subunit (PabA) and a aminodeoxychorismate synthase subunit (PabB). It depends on Mg(2+) as a cofactor.

It catalyses the reaction chorismate + L-glutamine = 4-amino-4-deoxychorismate + L-glutamate. The protein operates within cofactor biosynthesis; tetrahydrofolate biosynthesis; 4-aminobenzoate from chorismate: step 1/2. Part of a heterodimeric complex that catalyzes the two-step biosynthesis of 4-amino-4-deoxychorismate (ADC), a precursor of p-aminobenzoate (PABA) and tetrahydrofolate. In the first step, a glutamine amidotransferase (PabA) generates ammonia as a substrate that, along with chorismate, is used in the second step, catalyzed by aminodeoxychorismate synthase (PabB) to produce ADC. In Klebsiella aerogenes (Enterobacter aerogenes), this protein is Aminodeoxychorismate synthase component 1 (pabB).